We begin with the raw amino-acid sequence, 193 residues long: Holliday junction branch migration complex subunit RuvA (193 aa).

A domain I region spans residues 1–64 (MIGRIAGILL…EDAHLLYGFL (64 aa)). The segment at 65–139 (TPQERTTFRE…GKLGADLGAL (75 aa)) is domain II. Positions 139 to 143 (LAGAA) are flexible linker. Residues 144-193 (SPSDHAADILNALVALGYSEKEGLAAIKNVPAGTGVSDGIKLALKALSKA) are domain III.

It belongs to the RuvA family. As to quaternary structure, homotetramer. Forms an RuvA(8)-RuvB(12)-Holliday junction (HJ) complex. HJ DNA is sandwiched between 2 RuvA tetramers; dsDNA enters through RuvA and exits via RuvB. An RuvB hexamer assembles on each DNA strand where it exits the tetramer. Each RuvB hexamer is contacted by two RuvA subunits (via domain III) on 2 adjacent RuvB subunits; this complex drives branch migration. In the full resolvosome a probable DNA-RuvA(4)-RuvB(12)-RuvC(2) complex forms which resolves the HJ.

The protein localises to the cytoplasm. The RuvA-RuvB-RuvC complex processes Holliday junction (HJ) DNA during genetic recombination and DNA repair, while the RuvA-RuvB complex plays an important role in the rescue of blocked DNA replication forks via replication fork reversal (RFR). RuvA specifically binds to HJ cruciform DNA, conferring on it an open structure. The RuvB hexamer acts as an ATP-dependent pump, pulling dsDNA into and through the RuvAB complex. HJ branch migration allows RuvC to scan DNA until it finds its consensus sequence, where it cleaves and resolves the cruciform DNA. In Burkholderia vietnamiensis (strain G4 / LMG 22486) (Burkholderia cepacia (strain R1808)), this protein is Holliday junction branch migration complex subunit RuvA.